Consider the following 226-residue polypeptide: Apoptosis regulator OPG045 (226 aa).

It belongs to the orthopoxvirus OPG045 family. Homodimer. Interacts with host pro-apoptotic protein BCL2L11 (via BH3 domain). Interacts with host NLRP1. Interacts with host BAK.

The protein resides in the host mitochondrion outer membrane. It is found in the host cytoplasm. Its function is as follows. Plays a role in evading host innate immune response by inhibiting host inflammasome activation. Interacts with and inhibits NLR-mediated interleukin-1 beta/IL1B production in infected cells. At the host mitochondria outer membrane, interacts with the BH3 domain of host BAK and prevents BAK from binding active BAX. In turn, host apoptosis is inhibited. This is Apoptosis regulator OPG045 (OPG045) from Vaccinia virus (strain Copenhagen) (VACV).